Consider the following 1164-residue polypeptide: Phospholipid-transporting ATPase IA (1164 aa).

The Cytoplasmic portion of the chain corresponds to 1-65 (MPTMRRTVSE…TAKYNIITFL (65 aa)). At serine 25 the chain carries Phosphoserine. Residue threonine 28 is modified to Phosphothreonine. Position 29 is a phosphoserine (serine 29). A helical membrane pass occupies residues 66–86 (PRFLYSQFRRAANSFFLFIAL). Over 87–92 (LQQIPD) the chain is Exoplasmic loop. Residues 93–115 (VSPTGRYTTLVPLLFILAVAAIK) traverse the membrane as a helical segment. Topologically, residues 116-297 (EIIEDIKRHK…SNVERITNVQ (182 aa)) are cytoplasmic. The chain crosses the membrane as a helical span at residues 298-319 (ILILFCILIAMSLVCSVGSAIW). At 320–344 (NRRHSGKDWYLNLNYGGASNFGLNF) the chain is on the exoplasmic loop side. A helical membrane pass occupies residues 345 to 366 (LTFIILFNNLIPISLLVTLEVV). Residues 367-857 (KFTQAYFINW…GAWNYNRVSK (491 aa)) lie on the Cytoplasmic side of the membrane. Residue aspartate 409 is the 4-aspartylphosphate intermediate of the active site. The ATP site is built by aspartate 409, lysine 410, and threonine 411. Residue aspartate 409 participates in Mg(2+) binding. Position 411 (threonine 411) interacts with Mg(2+). Serine 443 bears the Phosphoserine mark. Residues glutamate 508, phenylalanine 549, lysine 572, arginine 605, threonine 685, glycine 686, aspartate 687, 741–748 (ALIIDGKT), arginine 775, and lysine 781 contribute to the ATP site. Aspartate 801 serves as a coordination point for Mg(2+). 2 residues coordinate ATP: asparagine 804 and aspartate 805. Aspartate 805 contributes to the Mg(2+) binding site. Residues 858–878 (CILYCFYKNIVLYIIEIWFAF) traverse the membrane as a helical segment. Residues 879-890 (VNGFSGQILFER) are Exoplasmic loop-facing. A helical membrane pass occupies residues 891-910 (WCIGLYNVMFTAMPPLTLGI). At 911 to 940 (FERSCRKENMLKYPELYKTSQNALDFNTKV) the chain is on the cytoplasmic side. The chain crosses the membrane as a helical span at residues 941 to 962 (FWVHCLNGLFHSVILFWFPLKA). Over 963 to 976 (LQYGTAFGNGKTSD) the chain is Exoplasmic loop. The helical transmembrane segment at 977 to 999 (YLLLGNFVYTFVVITVCLKAGLE) threads the bilayer. Over 1000-1005 (TSYWTW) the chain is Cytoplasmic. A helical membrane pass occupies residues 1006-1026 (FSHIAIWGSIALWVVFFGIYS). Topologically, residues 1027-1044 (SLWPAIPMAPDMSGEAAM) are exoplasmic loop. Residues 1045-1070 (LFSSGVFWMGLLFIPVASLLLDVVYK) form a helical membrane-spanning segment. Residues 1071 to 1164 (VIKRTAFKTL…DTTKQRPDEW (94 aa)) lie on the Cytoplasmic side of the membrane. 1095–1102 (GAVVLGKS) contributes to the ATP binding site. Serine 1126 is subject to Phosphoserine.

The protein belongs to the cation transport ATPase (P-type) (TC 3.A.3) family. Type IV subfamily. Component of a P4-ATPase flippase complex which consists of a catalytic alpha subunit and an accessory beta subunit. Interacts with TMEM30A to form a flippase complex; this complex forms an intermediate phosphoenzyme. Interacts with TMEM30B; this interaction is reported conflictingly. It depends on Mg(2+) as a cofactor. Cleaved by calpain in a caspase- and calcium influx-dependent manner during platelet apoptosis leading to a 100 kDa polypeptide. Found in most adult tissues except liver, testis and placenta. Most abundant in heart, brain and skeletal muscle. Also detected in fetal tissues. Isoform 1 is only detected in brain, skeletal muscle and heart and is the most abundant form in skeletal muscle. Highly expressed in platelets.

The protein localises to the cytoplasmic vesicle. It is found in the secretory vesicle. It localises to the chromaffin granule membrane. Its subcellular location is the cytoplasmic granule. The protein resides in the cell membrane. The protein localises to the endoplasmic reticulum. It is found in the golgi apparatus. It catalyses the reaction ATP + H2O + phospholipidSide 1 = ADP + phosphate + phospholipidSide 2.. The enzyme catalyses a 1,2-diacyl-sn-glycero-3-phospho-L-serine(out) + ATP + H2O = a 1,2-diacyl-sn-glycero-3-phospho-L-serine(in) + ADP + phosphate + H(+). With respect to regulation, ATPase activity is stimulated by phosphatidylserine (PS) and minimally by phosphatidylethanolamine (PE). ATPase activity is inhibited by beryllium fluoride and aluminum trifluoride. Functionally, catalytic component of a P4-ATPase flippase complex which catalyzes the hydrolysis of ATP coupled to the transport of aminophospholipids from the outer to the inner leaflet of various membranes and ensures the maintenance of asymmetric distribution of phospholipids. Phospholipid translocation also seems to be implicated in vesicle formation and in uptake of lipid signaling molecules. In vitro, its ATPase activity is selectively and stereospecifically stimulated by phosphatidylserine (PS). The flippase complex ATP8A1:TMEM30A seems to play a role in regulation of cell migration probably involving flippase-mediated translocation of phosphatidylethanolamine (PE) at the cell membrane. Acts as aminophospholipid translocase at the cell membrane in neuronal cells. In Homo sapiens (Human), this protein is Phospholipid-transporting ATPase IA.